Consider the following 255-residue polypeptide: 5-oxoprolinase subunit A (255 aa).

The protein belongs to the LamB/PxpA family. As to quaternary structure, forms a complex composed of PxpA, PxpB and PxpC.

It carries out the reaction 5-oxo-L-proline + ATP + 2 H2O = L-glutamate + ADP + phosphate + H(+). Its function is as follows. Catalyzes the cleavage of 5-oxoproline to form L-glutamate coupled to the hydrolysis of ATP to ADP and inorganic phosphate. This chain is 5-oxoprolinase subunit A, found in Nitrobacter winogradskyi (strain ATCC 25391 / DSM 10237 / CIP 104748 / NCIMB 11846 / Nb-255).